An 801-amino-acid chain; its full sequence is H(+)/Cl(-) exchange transporter 3 (801 aa).

The Cytoplasmic segment spans residues 1-125 (MESEQLFHRG…WEMTKSLYDA (125 aa)). Short sequence motifs (di-leucine internalization motif; mediates targeting to late endosome and lysosome membranes) lie at residues 28-29 (LL), 46-47 (LL), and 71-75 (LLDLL). A helical transmembrane segment spans residues 126–163 (WSGWLVVTLTGLASGALAGLIDIAADWMTDLKEGICLS). N-linked (GlcNAc...) asparagine glycosylation occurs at Asn-177. Residues 209–232 (MNYIMYIFWALSFAFLAVSLVKVF) form a helical membrane-spanning segment. The Selectivity filter part_1 signature appears at 238 to 242 (GSGIP). Position 239 (Ser-239) interacts with chloride. The segment at residues 241–248 (IPEIKTIL) is an intramembrane region (helical). 2 consecutive transmembrane segments (helical) span residues 258 to 276 (GKWT…VASG) and 282 to 301 (EGPL…YLFP). A Selectivity filter part_2 motif is present at residues 280 to 284 (GKEGP). 2 consecutive intramembrane regions (helical) follow at residues 313 to 325 (VLSA…VSVA) and 329 to 337 (PIGGVLFSL). 3 consecutive transmembrane segments (helical) span residues 349 to 367 (LWRS…RSIN), 391 to 416 (FPFI…AWCR), and 423 to 443 (FGKY…VIAF). Asn-451 and Asn-479 each carry an N-linked (GlcNAc...) asparagine glycan. A helical transmembrane segment spans residues 500 to 520 (IWQLCLALIFKIIMTVFTFGI). Positions 525 to 529 (GLFIP) match the Selectivity filter part_3 motif. Phe-527 provides a ligand contact to chloride. 2 consecutive intramembrane regions (helical) follow at residues 555 to 569 (GLYA…LGGV) and 573 to 584 (TVSLVVIVFELT). The note=Loop between two helices intramembrane region spans 585–588 (GGLE). The chain crosses the membrane as a helical span at residues 589-607 (YIVPLMAAVMTSKWVGDAF). Over 608 to 801 (GREGIYEAHI…NQDPASIMFN (194 aa)) the chain is Cytoplasmic. Tyr-613 contacts chloride. CBS domains are found at residues 641 to 705 (MRPR…ARKK) and 738 to 795 (LDMS…NQDP). Residues 672 to 674 (YNG) and 779 to 782 (TKKD) contribute to the ATP site.

Belongs to the chloride channel (TC 2.A.49) family. ClC-3/CLCN3 subfamily. As to quaternary structure, monomer and homodimer. Forms heterodimers with CLCN4. Post-translationally, N-glycosylated.

Its subcellular location is the early endosome membrane. It localises to the late endosome membrane. The protein resides in the lysosome membrane. It is found in the cell membrane. Strongly outwardly rectifying, electrogenic H(+)/Cl(-)exchanger which mediates the exchange of chloride ions against protons. The CLC channel family contains both chloride channels and proton-coupled anion transporters that exchange chloride or another anion for protons. The presence of conserved gating glutamate residues is typical for family members that function as antiporters. The sequence is that of H(+)/Cl(-) exchange transporter 3 (CLCN3) from Pongo abelii (Sumatran orangutan).